Here is a 426-residue protein sequence, read N- to C-terminus: Vitamin D3 receptor (426 aa).

The nuclear receptor DNA-binding region spans 21-96 (PRICGVCGDR…IGMMKEFILT (76 aa)). Residues C24, C27, C41, C44, C60, C66, C76, and C79 each coordinate Zn(2+). 2 consecutive NR C4-type zinc fingers follow at residues 24–44 (CGVC…CEGC) and 60–84 (CPFN…LKRC). The interval 97–126 (DEEVQRKREMILKRKEEEALKDSLRPKLSE) is hinge. Residues 127–422 (EQQRIITTLL…LTPLLFEVFG (296 aa)) enclose the NR LBD domain. Residue Y143 coordinates calcitriol. Positions 147–215 (YSDFSQFRPP…NEEDSDDPSV (69 aa)) are disordered. Residues 175–191 (SFSGNSSSSCSDHCTSS) show a composition bias toward low complexity. Residues 192-204 (PDTMEPTSFSNQD) show a composition bias toward polar residues. S235 lines the calcitriol pocket. An interaction with coactivator LXXLL motif region spans residues 244 to 262 (KMIPGFRDLTPEDQIVLLK). Calcitriol is bound by residues R272, S276, H304, and H396. The short motif at 415 to 423 (PLLFEVFGN) is the 9aaTAD element.

It belongs to the nuclear hormone receptor family. NR1 subfamily. Homodimer in the absence of bound vitamin D3. Heterodimer with RXRA after vitamin D3 binding. Interacts with MED1, NCOA1, NCOA2, NCOA3 and NCOA6 coactivators, leading to a strong increase of transcription of target genes. Interacts with the corepressor NCOR1. Interacts with SNW1. Interacts with IRX4, the interaction does not affect its transactivation activity. Interacts with CRY1. Interacts with CRY2 in a ligand-dependent manner. Post-translationally, ubiquitinated by UBR5, leading to its degradation: UBR5 specifically recognizes and binds ligand-bound VDR when it is not associated with coactivators (NCOAs). In presence of NCOAs, the UBR5-degron is not accessible, preventing its ubiquitination and degradation. As to expression, mammary gland, expression increases during lactation. Also found in colon, expression is down-regulated at parturition.

The protein localises to the nucleus. It is found in the cytoplasm. Functionally, nuclear receptor for calcitriol, the active form of vitamin D3 which mediates the action of this vitamin on cells. Enters the nucleus upon vitamin D3 binding where it forms heterodimers with the retinoid X receptor/RXR. The VDR-RXR heterodimers bind to specific response elements on DNA and activate the transcription of vitamin D3-responsive target genes. Plays a central role in calcium homeostasis. Also functions as a receptor for the secondary bile acid lithocholic acid (LCA) and its metabolites. This chain is Vitamin D3 receptor (VDR), found in Bos taurus (Bovine).